Reading from the N-terminus, the 424-residue chain is Serine--tRNA ligase (424 aa).

An L-serine-binding site is contributed by Thr231 to Glu233. Arg262–Glu264 is an ATP binding site. An L-serine-binding site is contributed by Glu285. Glu349–Ser352 provides a ligand contact to ATP. Ser385 contacts L-serine.

This sequence belongs to the class-II aminoacyl-tRNA synthetase family. Type-1 seryl-tRNA synthetase subfamily. In terms of assembly, homodimer. The tRNA molecule binds across the dimer.

The protein resides in the cytoplasm. The enzyme catalyses tRNA(Ser) + L-serine + ATP = L-seryl-tRNA(Ser) + AMP + diphosphate + H(+). The catalysed reaction is tRNA(Sec) + L-serine + ATP = L-seryl-tRNA(Sec) + AMP + diphosphate + H(+). It functions in the pathway aminoacyl-tRNA biosynthesis; selenocysteinyl-tRNA(Sec) biosynthesis; L-seryl-tRNA(Sec) from L-serine and tRNA(Sec): step 1/1. Catalyzes the attachment of serine to tRNA(Ser). Is also able to aminoacylate tRNA(Sec) with serine, to form the misacylated tRNA L-seryl-tRNA(Sec), which will be further converted into selenocysteinyl-tRNA(Sec). In Bacillus cereus (strain B4264), this protein is Serine--tRNA ligase.